The sequence spans 550 residues: CTP synthase (550 aa).

An amidoligase domain region spans residues 1 to 271 (MTRYIFITGG…DAEVLDVFGM (271 aa)). CTP is bound at residue serine 13. Residue serine 13 participates in UTP binding. 14-19 (SLGKGL) lines the ATP pocket. Tyrosine 54 contributes to the L-glutamine binding site. Aspartate 71 provides a ligand contact to ATP. Mg(2+) contacts are provided by aspartate 71 and glutamate 145. CTP is bound by residues 152-154 (DIE), 192-197 (KTKPTQ), and lysine 228. UTP-binding positions include 192–197 (KTKPTQ) and lysine 228. One can recognise a Glutamine amidotransferase type-1 domain in the interval 297 to 549 (TIAVVGKYTV…IAAAKEQGRL (253 aa)). Position 361 (glycine 361) interacts with L-glutamine. The active-site Nucleophile; for glutamine hydrolysis is the cysteine 388. Residues 389–392 (FGMQ), glutamate 412, and arginine 477 each bind L-glutamine. Active-site residues include histidine 522 and glutamate 524.

The protein belongs to the CTP synthase family. In terms of assembly, homotetramer.

It carries out the reaction UTP + L-glutamine + ATP + H2O = CTP + L-glutamate + ADP + phosphate + 2 H(+). The enzyme catalyses L-glutamine + H2O = L-glutamate + NH4(+). The catalysed reaction is UTP + NH4(+) + ATP = CTP + ADP + phosphate + 2 H(+). The protein operates within pyrimidine metabolism; CTP biosynthesis via de novo pathway; CTP from UDP: step 2/2. Its activity is regulated as follows. Allosterically activated by GTP, when glutamine is the substrate; GTP has no effect on the reaction when ammonia is the substrate. The allosteric effector GTP functions by stabilizing the protein conformation that binds the tetrahedral intermediate(s) formed during glutamine hydrolysis. Inhibited by the product CTP, via allosteric rather than competitive inhibition. Catalyzes the ATP-dependent amination of UTP to CTP with either L-glutamine or ammonia as the source of nitrogen. Regulates intracellular CTP levels through interactions with the four ribonucleotide triphosphates. The polypeptide is CTP synthase (Caulobacter sp. (strain K31)).